The sequence spans 269 residues: MAKRPVLEDVLDDEIDNMDMDIAQFDPSLRTPIAPVQPGPQITRSQDQEPPLFPNFPHPEQDKSVERKDIVDPNKFSAEERAELKKFQIIYPCYFDKSRSHKDGRRVSESKAVSNPLAKTISDACRHYNLPVMLELDKTHPQDFGNPGRVRVLIKDNNKNGMPVDSRFKTKRAVLNIIADYLKTHPTTLASIGPKSGIPLPSEYETGFEPGEIPKVKGFKMNTIVPVHSELTIKHPMTKSIYDPEPEQPQVKAPQAPKQPKKKVMKIRG.

Disordered regions lie at residues 30-65 (RTPI…DKSV) and 236-269 (PMTK…KIRG). Residues 248–258 (QPQVKAPQAPK) show a composition bias toward low complexity. The span at 259 to 269 (QPKKKVMKIRG) shows a compositional bias: basic residues.

It belongs to the SRP19 family. Fungal signal recognition particle consists of a 7S RNA molecule (scR1) and at least six protein subunits: SRP72, SRP68, SRP54, SEC65, SRP21 andSRP14.

It is found in the cytoplasm. Its function is as follows. Signal-recognition-particle assembly has a crucial role in targeting secretory proteins to the rough endoplasmic reticulum membrane. It must be involved intimately in the translocation of a wide variety of protein substrates. In Debaryomyces hansenii (strain ATCC 36239 / CBS 767 / BCRC 21394 / JCM 1990 / NBRC 0083 / IGC 2968) (Yeast), this protein is Signal recognition particle SEC65 subunit (SEC65).